A 212-amino-acid polypeptide reads, in one-letter code: Uridine kinase (212 aa).

Residue 13 to 20 coordinates ATP; sequence GASASGKS.

It belongs to the uridine kinase family.

Its subcellular location is the cytoplasm. The catalysed reaction is uridine + ATP = UMP + ADP + H(+). It catalyses the reaction cytidine + ATP = CMP + ADP + H(+). It participates in pyrimidine metabolism; CTP biosynthesis via salvage pathway; CTP from cytidine: step 1/3. It functions in the pathway pyrimidine metabolism; UMP biosynthesis via salvage pathway; UMP from uridine: step 1/1. The chain is Uridine kinase from Shewanella baltica (strain OS223).